The primary structure comprises 295 residues: MIEVLTTTDSQKLLHQLNALLEQESRCQPKVCGLRLIESAHDNGLRMTARLRDFEVKDLLSLTQFFGFDTETFSLAVNLLDRFLSKMKVQPKHLGCVGLSCFYLAVKSIEEERNVPLATDLIRISQYRFTVSDLMRMEKIVLEKVCWKVKATTAFQFLQLYYSLLQENLPLERRNSINFERLEAQLKACHCRIIFSKAKPSVLALSIIALEIQAQKCVELTEGIECLQKHSKINGRDLTFWQELVSKCLTEYSSNKCSKPNVQKLKWIVSGRTARQLKHSYYRITHLPTIPEMVP.

Belongs to the cyclin family. Cyclin G subfamily. In terms of tissue distribution, high levels in skeletal muscle, ovary, kidney and colon.

Its subcellular location is the nucleus. May play a role in growth regulation. Is associated with G2/M phase arrest in response to DNA damage. May be an intermediate by which p53 mediates its role as an inhibitor of cellular proliferation. This is Cyclin-G1 (CCNG1) from Homo sapiens (Human).